The primary structure comprises 422 residues: Phthiocerol/phthiodiolone dimycocerosyl transferase (422 aa).

Residue His-124 is the Proton acceptor of the active site.

It belongs to the acyltransferase PapA5 family. In terms of assembly, monomer. Interacts directly with the acyl carrier protein (ACP) domain of the mycocerosic acid synthase (mas) protein.

It catalyses the reaction 2 a mycocerosyl-[mycocerosic acid synthase] + a phthiocerol = a dimycocerosyl phthiocerol + 2 holo-[mycocerosic acid synthase].. It carries out the reaction 2 a mycocerosyl-[mycocerosic acid synthase] + a phthiodiolone = a dimycocerosyl phthiodiolone + 2 holo-[mycocerosic acid synthase].. The catalysed reaction is 2 a mycocerosyl-[mycocerosic acid synthase] + a phenolphthiocerol = a dimycocerosyl phenolphthiocerol + 2 holo-[mycocerosic acid synthase].. In terms of biological role, catalyzes diesterification of phthiocerol, phthiodiolone, and phenolphthiocerol with mycocerosic acids, the final step in the phthiocerol, phthiodiolone and phenolphthiocerol dimycocerosate esters (PDIM) synthesis. Can directly transfer the mycocerosate bound to the mycocerosic acid synthase (mas) onto the substrate alcohols. This is Phthiocerol/phthiodiolone dimycocerosyl transferase (papA5) from Mycobacterium tuberculosis (strain ATCC 25177 / H37Ra).